The primary structure comprises 211 residues: Cyclin-dependent kinase inhibitor 3 (211 aa).

A disordered region spans residues 1–20 (MKPPISIQASEFDSSDEEPV). Positions 1-34 (MKPPISIQASEFDSSDEEPVDEEQTPIQISWLPL) are interaction with CDK2. In terms of domain architecture, Tyrosine-protein phosphatase spans 32 to 200 (LPLSRVNCSQ…FRDKLAAYLS (169 aa)). The Phosphocysteine intermediate role is filled by Cys-140.

It belongs to the protein-tyrosine phosphatase family. As to quaternary structure, interacts with cyclin-dependent kinases such as CDK1, CDK2 and CDK3. Does not interact with CDK4. Interacts (via C-terminus) with phosphorylated CDK2 (via C-terminal helix). Interacts with MS4A3 (via C-terminus); the interaction enhances CDKN3 enzymatic activity.

It localises to the cytoplasm. Its subcellular location is the perinuclear region. The enzyme catalyses O-phospho-L-tyrosyl-[protein] + H2O = L-tyrosyl-[protein] + phosphate. The catalysed reaction is O-phospho-L-seryl-[protein] + H2O = L-seryl-[protein] + phosphate. It carries out the reaction O-phospho-L-threonyl-[protein] + H2O = L-threonyl-[protein] + phosphate. May play a role in cell cycle regulation. Dual specificity phosphatase active toward substrates containing either phosphotyrosine or phosphoserine residues. Dephosphorylates CDK2 at 'Thr-160' in a cyclin-dependent manner. The polypeptide is Cyclin-dependent kinase inhibitor 3 (Mus musculus (Mouse)).